We begin with the raw amino-acid sequence, 401 residues long: Pleckstrin homology-like domain family A member 1 (401 aa).

3 disordered regions span residues 39-67 (IQKRREGARPVPFSERSQEDGRGPAARSS), 190-222 (QQQQQQQQQQQQQQQPGQGPAEPSQPSGPAVAS), and 293-401 (KSTR…SNSA). The PH domain occupies 151–283 (LKEGVLEKRS…AEITLQMVQY (133 aa)). Over residues 190 to 204 (QQQQQQQQQQQQQQQ) the composition is skewed to low complexity. A compositionally biased stretch (pro residues) spans 308 to 344 (PSQPQPQPQLQPQPQPQPQPQPQPQSQPQPQPQPKPQ). Residues 311–346 (PQPQPQLQPQPQPQPQPQPQPQSQPQPQPQPKPQPQ) are 15 X 2 AA repeats of P-Q. Residues 352–378 (PHPHPHPHSHPHSHPHPHPHPHPHQIP) show a composition bias toward basic residues. Positions 352–389 (PHPHPHPHSHPHSHPHPHPHPHPHQIPHPHPQPHSQPH) are 14 X 2 AA repeats of P-H.

In terms of assembly, interacts with RPL14, EIF3S7 and PABPC4. As to expression, widely expressed with highest levels in pancreas. Strongly expressed by benign melanocytic nevi, and progressively reduced expressed in primary and metastatic melanomas (at protein level).

It localises to the cytoplasm. The protein resides in the cytoplasmic vesicle. The protein localises to the nucleus. Its subcellular location is the nucleolus. Functionally, seems to be involved in regulation of apoptosis. May be involved in detachment-mediated programmed cell death. May mediate apoptosis during neuronal development. May be involved in regulation of anti-apoptotic effects of IGF1. May be involved in translational regulation. In Homo sapiens (Human), this protein is Pleckstrin homology-like domain family A member 1 (PHLDA1).